Here is a 572-residue protein sequence, read N- to C-terminus: Phosphoglucomutase-1 (572 aa).

Substrate-binding positions include threonine 23, arginine 27, 126–127 (SH), and lysine 140. Catalysis depends on serine 126, which acts as the Phosphoserine intermediate. Mg(2+) is bound at residue serine 126. Residues aspartate 308, aspartate 310, and aspartate 312 each contribute to the Mg(2+) site. Substrate contacts are provided by residues 312-313 (DR), threonine 373, 392-394 (EES), lysine 405, and arginine 527.

The protein belongs to the phosphohexose mutase family. Mg(2+) serves as cofactor. Phosphorylated via a calcium-dependent protein kinase. Very rapidly (within 80 ms) dephosphorylated during triggered trichocyst exocytosis. Post-translationally, O-glycosylated with a short chain of mannose residues.

It is found in the cytoplasm. The catalysed reaction is alpha-D-glucose 1-phosphate = alpha-D-glucose 6-phosphate. In terms of biological role, may be involved in membrane fusion in exocytosis. In Paramecium tetraurelia, this protein is Phosphoglucomutase-1 (pp63-1).